The primary structure comprises 172 residues: Adenine phosphoribosyltransferase (172 aa).

This sequence belongs to the purine/pyrimidine phosphoribosyltransferase family. In terms of assembly, homodimer.

Its subcellular location is the cytoplasm. The catalysed reaction is AMP + diphosphate = 5-phospho-alpha-D-ribose 1-diphosphate + adenine. The protein operates within purine metabolism; AMP biosynthesis via salvage pathway; AMP from adenine: step 1/1. Its function is as follows. Catalyzes a salvage reaction resulting in the formation of AMP, that is energically less costly than de novo synthesis. In Parasynechococcus marenigrum (strain WH8102), this protein is Adenine phosphoribosyltransferase.